A 322-amino-acid chain; its full sequence is Putative DNA-directed RNA polymerase subunit alpha-like 2 (322 aa).

The alpha N-terminal domain (alpha-NTD) stretch occupies residues 1–232; that stretch reads MSNPNNGAEW…GLLSLVFQAE (232 aa). The interval 280–322 is alpha C-terminal domain (alpha-CTD); sequence EGPVTDEEGDSIDPTFTPVQKWDITMNSYQYSGETFQGLLSRF.

Belongs to the RNA polymerase alpha chain family. As to quaternary structure, in plastids the minimal PEP RNA polymerase catalytic core is composed of four subunits: alpha, beta, beta', and beta''. When a (nuclear-encoded) sigma factor is associated with the core the holoenzyme is formed, which can initiate transcription.

It localises to the plastid. The protein resides in the chloroplast. It carries out the reaction RNA(n) + a ribonucleoside 5'-triphosphate = RNA(n+1) + diphosphate. In terms of biological role, DNA-dependent RNA polymerase catalyzes the transcription of DNA into RNA using the four ribonucleoside triphosphates as substrates. The polypeptide is Putative DNA-directed RNA polymerase subunit alpha-like 2 (rpoAL2-A) (Pelargonium hortorum (Common geranium)).